Consider the following 214-residue polypeptide: Adenylate kinase (214 aa).

10 to 15 (GAGKGT) provides a ligand contact to ATP. The interval 30–59 (STGDMLRAAIKAGTELGKQAKTLMDAGQLV) is NMP. Residues Thr-31, Arg-36, 57 to 59 (QLV), 85 to 88 (GFPR), and Gln-92 each bind AMP. The interval 122 to 159 (GRRVHPASGRSYHVVYNPPKVEGKDDVTGEDLIIRADD) is LID. Residues Arg-123 and 132–133 (SY) contribute to the ATP site. 2 residues coordinate AMP: Arg-156 and Arg-167. Gln-200 is an ATP binding site.

It belongs to the adenylate kinase family. As to quaternary structure, monomer.

Its subcellular location is the cytoplasm. The catalysed reaction is AMP + ATP = 2 ADP. It functions in the pathway purine metabolism; AMP biosynthesis via salvage pathway; AMP from ADP: step 1/1. Functionally, catalyzes the reversible transfer of the terminal phosphate group between ATP and AMP. Plays an important role in cellular energy homeostasis and in adenine nucleotide metabolism. This chain is Adenylate kinase, found in Actinobacillus succinogenes (strain ATCC 55618 / DSM 22257 / CCUG 43843 / 130Z).